Here is a 396-residue protein sequence, read N- to C-terminus: Cell division protein FtsZ 1 (396 aa).

Residues 1 to 38 form a disordered region; the sequence is MDSIVQDAIDEAEESEDSASEPADVAGGGGDTVPTGTM. Acidic residues predominate over residues 8 to 19; it reads AIDEAEESEDSA. Residues 61 to 65, 148 to 150, Glu-179, Arg-183, and Asp-226 each bind GTP; these read GAGSN and GTG. The segment at 358-396 is disordered; it reads QIYGRNEAAEGDGPAQESTPEPEPEPQAGSEIEDIDYVE.

This sequence belongs to the FtsZ family. Homodimer. Polymerizes to form a dynamic ring structure in a strictly GTP-dependent manner. Interacts directly with several other division proteins.

It is found in the cytoplasm. Its function is as follows. Essential cell division protein that forms a contractile ring structure (Z ring) at the future cell division site. The regulation of the ring assembly controls the timing and the location of cell division. One of the functions of the FtsZ ring is to recruit other cell division proteins to the septum to produce a new cell wall between the dividing cells. Binds GTP and shows GTPase activity. This chain is Cell division protein FtsZ 1, found in Halobacterium salinarum (strain ATCC 29341 / DSM 671 / R1).